We begin with the raw amino-acid sequence, 114 residues long: MAGLKVRKGDTVQVIAGKDRGTKGKVIAAFPREQKLLVEGVNRVRRHTKVTATTRGSKTGGIITKEAPIHVSNVMVVCPECEKPTRLGRRQDVVDASTGKTRPVRICKRCGKEI.

Belongs to the universal ribosomal protein uL24 family. As to quaternary structure, part of the 50S ribosomal subunit.

One of two assembly initiator proteins, it binds directly to the 5'-end of the 23S rRNA, where it nucleates assembly of the 50S subunit. Its function is as follows. One of the proteins that surrounds the polypeptide exit tunnel on the outside of the subunit. The sequence is that of Large ribosomal subunit protein uL24 from Acidothermus cellulolyticus (strain ATCC 43068 / DSM 8971 / 11B).